The primary structure comprises 431 residues: Serine--tRNA ligase (431 aa).

Residue 235 to 237 coordinates L-serine; the sequence is TAE. Residues 266–268 and Val282 contribute to the ATP site; that span reads RRE. Glu289 is a binding site for L-serine. ATP is bound at residue 353–356; that stretch reads EASS. Ser389 contacts L-serine.

This sequence belongs to the class-II aminoacyl-tRNA synthetase family. Type-1 seryl-tRNA synthetase subfamily. As to quaternary structure, homodimer. The tRNA molecule binds across the dimer.

It is found in the cytoplasm. The catalysed reaction is tRNA(Ser) + L-serine + ATP = L-seryl-tRNA(Ser) + AMP + diphosphate + H(+). The enzyme catalyses tRNA(Sec) + L-serine + ATP = L-seryl-tRNA(Sec) + AMP + diphosphate + H(+). It functions in the pathway aminoacyl-tRNA biosynthesis; selenocysteinyl-tRNA(Sec) biosynthesis; L-seryl-tRNA(Sec) from L-serine and tRNA(Sec): step 1/1. Catalyzes the attachment of serine to tRNA(Ser). Is also able to aminoacylate tRNA(Sec) with serine, to form the misacylated tRNA L-seryl-tRNA(Sec), which will be further converted into selenocysteinyl-tRNA(Sec). The chain is Serine--tRNA ligase from Prosthecochloris aestuarii (strain DSM 271 / SK 413).